Reading from the N-terminus, the 437-residue chain is Glutamate-1-semialdehyde 2,1-aminomutase (437 aa).

Lys274 is subject to N6-(pyridoxal phosphate)lysine.

This sequence belongs to the class-III pyridoxal-phosphate-dependent aminotransferase family. HemL subfamily. In terms of assembly, homodimer. Requires pyridoxal 5'-phosphate as cofactor.

It localises to the cytoplasm. The enzyme catalyses (S)-4-amino-5-oxopentanoate = 5-aminolevulinate. Its pathway is porphyrin-containing compound metabolism; protoporphyrin-IX biosynthesis; 5-aminolevulinate from L-glutamyl-tRNA(Glu): step 2/2. This chain is Glutamate-1-semialdehyde 2,1-aminomutase, found in Paracidovorax citrulli (strain AAC00-1) (Acidovorax citrulli).